Consider the following 354-residue polypeptide: Rhodopsin (354 aa).

Over 1–36 (MNGTEGPNFYIPMSNKTGVVRSPFEYPQYYLAEPWK) the chain is Extracellular. 2 N-linked (GlcNAc...) asparagine glycosylation sites follow: asparagine 2 and asparagine 15. The helical transmembrane segment at 37–61 (YSILAAYMFLLILLGFPINFMTLYV) threads the bilayer. At 62 to 73 (TIQHKKLRTPLN) the chain is on the cytoplasmic side. Residues 74–96 (YILLNLAFANHFMVLCGFTITLY) form a helical membrane-spanning segment. Over 97 to 110 (TSLHGYFVFGQSGC) the chain is Extracellular. Cysteine 110 and cysteine 187 form a disulfide bridge. The helical transmembrane segment at 111–133 (YFEGFFATLGGEIALWSLVALAI) threads the bilayer. The short motif at 134-136 (ERY) is the 'Ionic lock' involved in activated form stabilization element. The Cytoplasmic segment spans residues 134-152 (ERYIVVCKPMSNFRFGENH). A helical transmembrane segment spans residues 153–173 (AMMGVAFTWIMALACAVPPLF). Residues 174–202 (GWSRYIPEGMQCSCGVDYYTLKPEINNES) lie on the Extracellular side of the membrane. The chain crosses the membrane as a helical span at residues 203–224 (FVIYMFVVHFLIPLIIITFCYG). Over 225 to 252 (RLVCTVKEAAAQQQESATTQKAEKEVTR) the chain is Cytoplasmic. The helical transmembrane segment at 253-274 (MVIIMVIFFLICWVPYAYVAFY) threads the bilayer. Topologically, residues 275–286 (IFCNQGSEFGPI) are extracellular. The helical transmembrane segment at 287-308 (FMTVPAFFAKSSAIYNPVIYIM) threads the bilayer. Lysine 296 carries the N6-(retinylidene)lysine modification. At 309-354 (LNKQFRNCMITTLCCGKNPFGDDDASSAATSKTEATSVSTSQVSPA) the chain is on the cytoplasmic side. 2 S-palmitoyl cysteine lipidation sites follow: cysteine 322 and cysteine 323. The disordered stretch occupies residues 332 to 354 (DASSAATSKTEATSVSTSQVSPA). A compositionally biased stretch (low complexity) spans 334-354 (SSAATSKTEATSVSTSQVSPA).

It belongs to the G-protein coupled receptor 1 family. Opsin subfamily. In terms of processing, contains one covalently linked retinal chromophore. Upon light absorption, the covalently bound 11-cis-retinal is converted to all-trans-retinal. After hydrolysis of the Schiff base and release of the covalently bound all-trans-retinal, active rhodopsin is regenerated by binding of a fresh molecule of 11-cis-retinal.

It is found in the membrane. Its subcellular location is the cell projection. It localises to the cilium. The protein localises to the photoreceptor outer segment. In terms of biological role, photoreceptor required for image-forming vision at low light intensity. Required for photoreceptor cell viability after birth. Light-induced isomerization of 11-cis to all-trans retinal triggers a conformational change that activates signaling via G-proteins. Subsequent receptor phosphorylation mediates displacement of the bound G-protein alpha subunit by arrestin and terminates signaling. The sequence is that of Rhodopsin (RHO) from Rana temporaria (European common frog).